Consider the following 325-residue polypeptide: Holliday junction branch migration complex subunit RuvB (325 aa).

Residues Met1–Tyr180 form a large ATPase domain (RuvB-L) region. ATP-binding positions include Leu19, Arg20, Gly61, Lys64, Thr65, Thr66, Glu127 to Phe129, Arg170, Tyr180, and Arg217. A Mg(2+)-binding site is contributed by Thr65. The small ATPAse domain (RuvB-S) stretch occupies residues Ser181–Gly251. Residues Lys254 to His325 form a head domain (RuvB-H) region. Positions 290, 309, and 314 each coordinate DNA.

Belongs to the RuvB family. Homohexamer. Forms an RuvA(8)-RuvB(12)-Holliday junction (HJ) complex. HJ DNA is sandwiched between 2 RuvA tetramers; dsDNA enters through RuvA and exits via RuvB. An RuvB hexamer assembles on each DNA strand where it exits the tetramer. Each RuvB hexamer is contacted by two RuvA subunits (via domain III) on 2 adjacent RuvB subunits; this complex drives branch migration. In the full resolvosome a probable DNA-RuvA(4)-RuvB(12)-RuvC(2) complex forms which resolves the HJ.

It localises to the cytoplasm. It carries out the reaction ATP + H2O = ADP + phosphate + H(+). Functionally, the RuvA-RuvB-RuvC complex processes Holliday junction (HJ) DNA during genetic recombination and DNA repair, while the RuvA-RuvB complex plays an important role in the rescue of blocked DNA replication forks via replication fork reversal (RFR). RuvA specifically binds to HJ cruciform DNA, conferring on it an open structure. The RuvB hexamer acts as an ATP-dependent pump, pulling dsDNA into and through the RuvAB complex. RuvB forms 2 homohexamers on either side of HJ DNA bound by 1 or 2 RuvA tetramers; 4 subunits per hexamer contact DNA at a time. Coordinated motions by a converter formed by DNA-disengaged RuvB subunits stimulates ATP hydrolysis and nucleotide exchange. Immobilization of the converter enables RuvB to convert the ATP-contained energy into a lever motion, pulling 2 nucleotides of DNA out of the RuvA tetramer per ATP hydrolyzed, thus driving DNA branch migration. The RuvB motors rotate together with the DNA substrate, which together with the progressing nucleotide cycle form the mechanistic basis for DNA recombination by continuous HJ branch migration. Branch migration allows RuvC to scan DNA until it finds its consensus sequence, where it cleaves and resolves cruciform DNA. This Orientia tsutsugamushi (strain Ikeda) (Rickettsia tsutsugamushi) protein is Holliday junction branch migration complex subunit RuvB.